A 482-amino-acid chain; its full sequence is Zinc metalloproteinase/disintegrin (482 aa).

Positions 1–20 (MIQVLLVTICLAAFPYQGSS) are cleaved as a signal peptide. A propeptide spanning residues 21-189 (MILESGNVND…IKASQLVVTA (169 aa)) is cleaved from the precursor. The Peptidase M12B domain occupies 197–393 (RYIELVVVAD…HNPQCILNEP (197 aa)). E200 and D284 together coordinate Ca(2+). 2 cysteine pairs are disulfide-bonded: C308-C388 and C348-C372. H333 is a binding site for Zn(2+). Residue E334 is part of the active site. Zn(2+)-binding residues include H337 and H343. The Ca(2+) site is built by C388 and N391. Positions 394 to 409 (LRTDTVSTPVSGNELL) are excised as a propeptide. Residues 401–482 (TPVSGNELLE…AGCPRNPFHA (82 aa)) enclose the Disintegrin domain. Intrachain disulfides connect C415-C430, C417-C425, C424-C447, C438-C444, C443-C468, and C456-C475. Positions 460–462 (RGD) match the Cell attachment site motif.

This sequence belongs to the venom metalloproteinase (M12B) family. P-II subfamily. P-IId sub-subfamily. As to quaternary structure, homodimer; disulfide-linked (disintegrin). Requires Zn(2+) as cofactor. As to expression, expressed by the venom gland.

It is found in the secreted. This recombinant protein hydrolyzes fibronectin, but has no effect on type I gelatin and type I to V collagens. Selectively hydrolyzes the Aalpha-chain of fibrinogen (FGA), but has no effect on fibrin. Functionally, inhibits ADP-induced platelet aggregation. Its function is as follows. Recombinant metalloproteinase-disintegrin Mt-d-I (393-408): hydrolyzes type I gelatin, type III and V collagens, but has no effect on type I, II, IV collagens and fibronectin. Selectively hydrolyzes the Aalpha-chain of fibrinogen, but has no effect on fibrin. May induce hemorrhage in vascular tissue. Strongly inhibits ADP-induced platelet aggregation. When concentrated, Mt-d-I undergoes autoproteolytic processing into metalloproteinase and disintegrin. In Gloydius brevicauda (Korean slamosa snake), this protein is Zinc metalloproteinase/disintegrin.